The chain runs to 1437 residues: Protein CC2D2B (1437 aa).

This is Protein CC2D2B from Homo sapiens (Human).